The sequence spans 410 residues: Multifunctional CCA protein (410 aa).

Residues glycine 8 and arginine 11 each contribute to the ATP site. CTP is bound by residues glycine 8 and arginine 11. Mg(2+) contacts are provided by aspartate 21 and aspartate 23. ATP contacts are provided by arginine 91, arginine 137, and arginine 140. CTP-binding residues include arginine 91, arginine 137, and arginine 140. The HD domain maps to 228–329 (TGVHVLSVLQ…LELLQSFDVY (102 aa)).

It belongs to the tRNA nucleotidyltransferase/poly(A) polymerase family. Bacterial CCA-adding enzyme type 1 subfamily. In terms of assembly, monomer. Can also form homodimers and oligomers. Mg(2+) is required as a cofactor. Requires Ni(2+) as cofactor.

It catalyses the reaction a tRNA precursor + 2 CTP + ATP = a tRNA with a 3' CCA end + 3 diphosphate. The catalysed reaction is a tRNA with a 3' CCA end + 2 CTP + ATP = a tRNA with a 3' CCACCA end + 3 diphosphate. Catalyzes the addition and repair of the essential 3'-terminal CCA sequence in tRNAs without using a nucleic acid template. Adds these three nucleotides in the order of C, C, and A to the tRNA nucleotide-73, using CTP and ATP as substrates and producing inorganic pyrophosphate. tRNA 3'-terminal CCA addition is required both for tRNA processing and repair. Also involved in tRNA surveillance by mediating tandem CCA addition to generate a CCACCA at the 3' terminus of unstable tRNAs. While stable tRNAs receive only 3'-terminal CCA, unstable tRNAs are marked with CCACCA and rapidly degraded. This chain is Multifunctional CCA protein, found in Pseudomonas paraeruginosa (strain DSM 24068 / PA7) (Pseudomonas aeruginosa (strain PA7)).